The following is a 136-amino-acid chain: MARTKQTARKSTGGKAPRKQLATKAARKSAPASGGVKKPHRFRPGTVALREIRRFQKSTELLVRKLPFQRLVREIAQDFKSDLRFQSSAVLALQEAAEAYMVGLFEDTNLCAIHAKRVTIMPKDIQLARRIRGERT.

Positions 1 to 43 (MARTKQTARKSTGGKAPRKQLATKAARKSAPASGGVKKPHRFR) are disordered. Residue Lys-5 is modified to N6-methylated lysine. The residue at position 10 (Lys-10) is an N6-acetyllysine; alternate. The residue at position 10 (Lys-10) is an N6-methylated lysine; alternate. Ser-11 is subject to Phosphoserine. Thr-12 is modified (phosphothreonine). Lys-15 is subject to N6-acetyllysine. N6-acetyllysine; alternate occurs at positions 19 and 24. Lys-19 and Lys-24 each carry N6-methylated lysine; alternate. Lys-28 bears the N6-methylated lysine mark. A Phosphoserine modification is found at Ser-29. The residue at position 37 (Lys-37) is an N6-methylated lysine.

This sequence belongs to the histone H3 family. The nucleosome is a histone octamer containing two molecules each of H2A, H2B, H3 and H4 assembled in one H3-H4 heterotetramer and two H2A-H2B heterodimers. The octamer wraps approximately 147 bp of DNA. Acetylation is generally linked to gene activation. Can be acetylated to form H3K9ac, H3K14ac, H3K18ac and H3K23ac. H3K9ac could compete with H3K9me and prevent gene silencing. H3K9ac is restricted to euchromatin. In terms of processing, methylated to form mainly H3K4me, H3K9me, H3K18me, H3K23me, H3K27me and H3K36me. H3K4me1/2/3, H3K9me3, H3K27me3 and H3K36me1/2/3 are typical marks for euchromatin, whereas heterochromatic chromocenters are enriched in H3K9me1/2 and H3K27me1/2. H2BK143ub1 is probably prerequisite for H3K4me. Post-translationally, can be phosphorylated to form H3S10ph, H3T11ph and H3S28ph.

Its subcellular location is the nucleus. The protein localises to the chromosome. Functionally, core component of nucleosome. Nucleosomes wrap and compact DNA into chromatin, limiting DNA accessibility to the cellular machineries which require DNA as a template. Histones thereby play a central role in transcription regulation, DNA repair, DNA replication and chromosomal stability. DNA accessibility is regulated via a complex set of post-translational modifications of histones, also called histone code, and nucleosome remodeling. The chain is Histone H3 from Griffithsia japonica (Red alga).